A 411-amino-acid chain; its full sequence is Mitotic apparatus protein p62 (411 aa).

Composition is skewed to acidic residues over residues 134–156, 183–201, and 246–321; these read AYEV…EEEE, ELDE…EEEI, and DDDE…EEDS. The interval 134 to 378 is disordered; the sequence is AYEVGDEDLE…KSPSKPKKEE (245 aa). The segment covering 351–367 has biased composition (basic and acidic residues); it reads GMKEKKTYSLEDMKQDL.

Belongs to the nucleoplasmin family. In terms of processing, phosphorylated by CaM-kinase II in vitro.

Its subcellular location is the nucleus. In terms of biological role, required for mitotic progression. Binds to chromatin. In Lytechinus pictus (Painted sea urchin), this protein is Mitotic apparatus protein p62.